The sequence spans 277 residues: Probable diphthine methyl ester synthase (277 aa).

Residues leucine 9, aspartate 89, glycine 92, 117 to 118 (SV), leucine 168, leucine 227, and histidine 252 each bind S-adenosyl-L-methionine.

This sequence belongs to the diphthine synthase family.

The catalysed reaction is 2-[(3S)-amino-3-carboxypropyl]-L-histidyl-[translation elongation factor 2] + 4 S-adenosyl-L-methionine = diphthine methyl ester-[translation elongation factor 2] + 4 S-adenosyl-L-homocysteine + 3 H(+). The protein operates within protein modification; peptidyl-diphthamide biosynthesis. In terms of biological role, S-adenosyl-L-methionine-dependent methyltransferase that catalyzes four methylations of the modified target histidine residue in translation elongation factor 2 (EF-2), to form an intermediate called diphthine methyl ester. The four successive methylation reactions represent the second step of diphthamide biosynthesis. This chain is Probable diphthine methyl ester synthase, found in Arabidopsis thaliana (Mouse-ear cress).